A 704-amino-acid chain; its full sequence is Urea-proton symporter DUR3 (704 aa).

Helical transmembrane passes span Tyr-39–Leu-59, Val-80–Leu-100, Phe-115–Ile-135, Ile-159–Gly-179, Leu-192–Leu-212, Phe-216–Leu-236, Ser-291–Val-311, Leu-336–Leu-356, Leu-388–Ser-408, Ala-435–Val-455, Tyr-461–Trp-481, Ala-486–Thr-506, Leu-527–Val-547, Ala-590–Leu-610, and Phe-622–Gly-642.

This sequence belongs to the sodium:solute symporter (SSF) (TC 2.A.21) family. As to expression, expressed in root rhizodermis, including root hairs and cortex in more basal root zones. Expressed in shoots.

The protein resides in the cell membrane. High-affinity urea-proton symporter involved in the active transport of urea across the plasma membrane into root cells. May play an important role in urea uptake by plant cells at low external urea concentrations. This is Urea-proton symporter DUR3 (DUR3) from Arabidopsis thaliana (Mouse-ear cress).